We begin with the raw amino-acid sequence, 100 residues long: MIQQERLLKVLKAPHVSEKATNNAEKSNTIVFKVALDANKVEIANAVEQLFEVKVDSVRTVVVKGKTKRHGARMGRRSDWKKAYVTLQEGQSLDFVEGAE.

Belongs to the universal ribosomal protein uL23 family. As to quaternary structure, part of the 50S ribosomal subunit. Contacts protein L29, and trigger factor when it is bound to the ribosome.

In terms of biological role, one of the early assembly proteins it binds 23S rRNA. One of the proteins that surrounds the polypeptide exit tunnel on the outside of the ribosome. Forms the main docking site for trigger factor binding to the ribosome. The protein is Large ribosomal subunit protein uL23 of Pasteurella multocida (strain Pm70).